A 284-amino-acid chain; its full sequence is 2-dehydro-3-deoxyphosphooctonate aldolase (284 aa).

It belongs to the KdsA family.

It is found in the cytoplasm. The catalysed reaction is D-arabinose 5-phosphate + phosphoenolpyruvate + H2O = 3-deoxy-alpha-D-manno-2-octulosonate-8-phosphate + phosphate. The protein operates within carbohydrate biosynthesis; 3-deoxy-D-manno-octulosonate biosynthesis; 3-deoxy-D-manno-octulosonate from D-ribulose 5-phosphate: step 2/3. It participates in bacterial outer membrane biogenesis; lipopolysaccharide biosynthesis. The chain is 2-dehydro-3-deoxyphosphooctonate aldolase from Enterobacter sp. (strain 638).